We begin with the raw amino-acid sequence, 348 residues long: Phosphate acyltransferase (348 aa).

This sequence belongs to the PlsX family. As to quaternary structure, homodimer. Probably interacts with PlsY.

It is found in the cytoplasm. The enzyme catalyses a fatty acyl-[ACP] + phosphate = an acyl phosphate + holo-[ACP]. Its pathway is lipid metabolism; phospholipid metabolism. Catalyzes the reversible formation of acyl-phosphate (acyl-PO(4)) from acyl-[acyl-carrier-protein] (acyl-ACP). This enzyme utilizes acyl-ACP as fatty acyl donor, but not acyl-CoA. This is Phosphate acyltransferase from Synechocystis sp. (strain ATCC 27184 / PCC 6803 / Kazusa).